The following is a 1414-amino-acid chain: DNA-directed RNA polymerase subunit beta' (1414 aa).

Zn(2+)-binding residues include Cys70, Cys72, Cys85, and Cys88. Mg(2+) contacts are provided by Asp460, Asp462, and Asp464. Positions 814, 888, 895, and 898 each coordinate Zn(2+). A compositionally biased stretch (low complexity) spans 1392–1403 (EQALSEALKSSA). Residues 1392–1414 (EQALSEALKSSAPQEAKAAQKDE) form a disordered region.

Belongs to the RNA polymerase beta' chain family. As to quaternary structure, the RNAP catalytic core consists of 2 alpha, 1 beta, 1 beta' and 1 omega subunit. When a sigma factor is associated with the core the holoenzyme is formed, which can initiate transcription. Requires Mg(2+) as cofactor. The cofactor is Zn(2+).

The catalysed reaction is RNA(n) + a ribonucleoside 5'-triphosphate = RNA(n+1) + diphosphate. DNA-dependent RNA polymerase catalyzes the transcription of DNA into RNA using the four ribonucleoside triphosphates as substrates. The chain is DNA-directed RNA polymerase subunit beta' from Coxiella burnetii (strain RSA 331 / Henzerling II).